The following is a 388-amino-acid chain: 5-hydroxytryptamine receptor 4 (388 aa).

Over 1–19 the chain is Extracellular; the sequence is MDKLDANVSSKEGFGSVEK. Residue N7 is glycosylated (N-linked (GlcNAc...) asparagine). The chain crosses the membrane as a helical span at residues 20-44; it reads VVLLTFLSAVILMAILGNLLVMVAV. Residues 45-54 are Cytoplasmic-facing; that stretch reads CRDRQLRKIK. A helical membrane pass occupies residues 55–78; it reads TNYFIVSLAFADLLVSVLVMPFGA. At 79-92 the chain is on the extracellular side; sequence IELVQDIWVYGEMF. Residues 93-117 form a helical membrane-spanning segment; that stretch reads CLVRTSLDVLLTTASIFHLCCISLD. C93 and C184 are joined by a disulfide. Residue D100 participates in serotonin binding. Topologically, residues 118–133 are cytoplasmic; the sequence is RYYAICCQPLVYRNKM. Residues 134-157 traverse the membrane as a helical segment; that stretch reads TPLRIALMLGGCWVIPMFISFLPI. Over 158–188 the chain is Extracellular; that stretch reads MQGWNNIGIVDLIEKRKFNQNSNSTYCVFMV. Residues 189-212 traverse the membrane as a helical segment; it reads NKPYAITCSVVAFYIPFLLMVLAY. Over 213–257 the chain is Cytoplasmic; the sequence is YRIYVTAKEHARQIQVLQRAGAPAEGRPQPADQHSTHRMRTETKA. The chain crosses the membrane as a helical span at residues 258-283; sequence AKTLCIIMGCFCLCWAPFFVTNIVDP. A serotonin-binding site is contributed by N279. Topologically, residues 284-290 are extracellular; that stretch reads FIDYTVP. The helical transmembrane segment at 291–314 threads the bilayer; it reads GQLWTAFLWLGYINSGLNPFLYAF. Over 315–388 the chain is Cytoplasmic; that stretch reads LNKSFRRAFL…PLVAAQPIDT (74 aa).

It belongs to the G-protein coupled receptor 1 family. In terms of assembly, interacts (via C-terminus 330-346 AA) with GRK5; this interaction is promoted by 5-HT (serotonin).

The protein localises to the cell membrane. Its subcellular location is the endosome membrane. In terms of biological role, G-protein coupled receptor for 5-hydroxytryptamine (serotonin), a biogenic hormone that functions as a neurotransmitter, a hormone and a mitogen. Ligand binding causes a conformation change that triggers signaling via guanine nucleotide-binding proteins (G proteins) and modulates the activity of downstream effectors. HTR4 is coupled to G(s) G alpha proteins and mediates activation of adenylate cyclase activity. The chain is 5-hydroxytryptamine receptor 4 (HTR4) from Cavia porcellus (Guinea pig).